Consider the following 123-residue polypeptide: Large ribosomal subunit protein eL8 (123 aa).

It belongs to the eukaryotic ribosomal protein eL8 family. Part of the 50S ribosomal subunit. Probably part of the RNase P complex.

Its subcellular location is the cytoplasm. Functionally, multifunctional RNA-binding protein that recognizes the K-turn motif in ribosomal RNA, the RNA component of RNase P, box H/ACA, box C/D and box C'/D' sRNAs. The protein is Large ribosomal subunit protein eL8 of Methanosphaera stadtmanae (strain ATCC 43021 / DSM 3091 / JCM 11832 / MCB-3).